The sequence spans 245 residues: 3-deoxy-manno-octulosonate cytidylyltransferase (245 aa).

Belongs to the KdsB family.

Its subcellular location is the cytoplasm. The catalysed reaction is 3-deoxy-alpha-D-manno-oct-2-ulosonate + CTP = CMP-3-deoxy-beta-D-manno-octulosonate + diphosphate. Its pathway is nucleotide-sugar biosynthesis; CMP-3-deoxy-D-manno-octulosonate biosynthesis; CMP-3-deoxy-D-manno-octulosonate from 3-deoxy-D-manno-octulosonate and CTP: step 1/1. It participates in bacterial outer membrane biogenesis; lipopolysaccharide biosynthesis. In terms of biological role, activates KDO (a required 8-carbon sugar) for incorporation into bacterial lipopolysaccharide in Gram-negative bacteria. The protein is 3-deoxy-manno-octulosonate cytidylyltransferase of Rhodopseudomonas palustris (strain TIE-1).